Consider the following 372-residue polypeptide: GDP-mannose 4,6-dehydratase (372 aa).

Residues G8–D13, D63–L64, L85–S89, and Y100 each bind NADP(+). T132 is a catalytic residue. Catalysis depends on nucleophile residues E134 and Y156. NADP(+)-binding residues include K160, H186, and R191.

It belongs to the NAD(P)-dependent epimerase/dehydratase family. GDP-mannose 4,6-dehydratase subfamily. The cofactor is NADP(+).

It catalyses the reaction GDP-alpha-D-mannose = GDP-4-dehydro-alpha-D-rhamnose + H2O. The protein operates within bacterial outer membrane biogenesis; LPS O-antigen biosynthesis. It functions in the pathway nucleotide-sugar biosynthesis; GDP-L-fucose biosynthesis via de novo pathway; GDP-L-fucose from GDP-alpha-D-mannose: step 1/2. In terms of biological role, catalyzes the conversion of GDP-D-mannose to GDP-4-dehydro-6-deoxy-D-mannose. The chain is GDP-mannose 4,6-dehydratase from Yersinia enterocolitica serotype O:8 / biotype 1B (strain NCTC 13174 / 8081).